The chain runs to 134 residues: Small ribosomal subunit protein bS16 (134 aa).

The disordered stretch occupies residues 79-134; it reads AGIAKRPSRNNPTKGEPGKKAQERLALAKQAEEEAAAKAAEAAAAAAAPAEEAASE. Residues 115 to 134 are compositionally biased toward low complexity; the sequence is AKAAEAAAAAAAPAEEAASE.

It belongs to the bacterial ribosomal protein bS16 family.

The sequence is that of Small ribosomal subunit protein bS16 from Brucella suis (strain ATCC 23445 / NCTC 10510).